The sequence spans 444 residues: Tubulin beta-6 chain (444 aa).

Residues Q11, E69, S138, G142, T143, G144, N204, and N226 each contribute to the GTP site. E69 contributes to the Mg(2+) binding site.

The protein belongs to the tubulin family. Dimer of alpha and beta chains. A typical microtubule is a hollow water-filled tube with an outer diameter of 25 nm and an inner diameter of 15 nM. Alpha-beta heterodimers associate head-to-tail to form protofilaments running lengthwise along the microtubule wall with the beta-tubulin subunit facing the microtubule plus end conferring a structural polarity. Microtubules usually have 13 protofilaments but different protofilament numbers can be found in some organisms and specialized cells. Mg(2+) serves as cofactor. In terms of tissue distribution, expressed in roots, leaf sheaths, anthers, and suspension cultured cells.

The protein resides in the cytoplasm. It localises to the cytoskeleton. In terms of biological role, tubulin is the major constituent of microtubules, a cylinder consisting of laterally associated linear protofilaments composed of alpha- and beta-tubulin heterodimers. Microtubules grow by the addition of GTP-tubulin dimers to the microtubule end, where a stabilizing cap forms. Below the cap, tubulin dimers are in GDP-bound state, owing to GTPase activity of alpha-tubulin. The polypeptide is Tubulin beta-6 chain (TUBB6) (Oryza sativa subsp. japonica (Rice)).